We begin with the raw amino-acid sequence, 167 residues long: MELWSELQSYQNLRRLLELASARTSSCWRILFGSTLTNVIYRAKEEYSSRFADLLSHNPGIFASLNLGHHSFFQEIVIRNLDFSSPGRTVSGLAFICFILDQWSAQTHLSQGYTLDYMAMALWRTLLRRKRVLGCLPAQRPHGLDPVQEEEEEEENLRAGLDPSTEL.

Positions 143-167 are disordered; that stretch reads GLDPVQEEEEEEENLRAGLDPSTEL.

The protein belongs to the adenoviridae E1B 19 kDa protein family.

Its subcellular location is the host cell membrane. The protein resides in the host nucleus envelope. It is found in the host nucleus lamina. Its function is as follows. Putative adenovirus Bcl-2 homolog that inhibits apoptosis induced by TNF or FAS pathways, as well as p53-mediated apoptosis. Without E1B 19K function, virus production is compromised because of premature death of host cell. Interacts with Bax protein in cell lysates. In Human adenovirus F serotype 40 (HAdV-40), this protein is E1B protein, small T-antigen.